Reading from the N-terminus, the 80-residue chain is KSTELLIRKLPFQRLVREIAQDFKTDLRFQSHAVLALQEAAEAYLVGLFEDTNLCAIHAKRVTIMPKDIQLARRIRGERA.

It belongs to the histone H3 family. As to quaternary structure, the nucleosome is a histone octamer containing two molecules each of H2A, H2B, H3 and H4 assembled in one H3-H4 heterotetramer and two H2A-H2B heterodimers. The octamer wraps approximately 147 bp of DNA.

Its subcellular location is the nucleus. The protein resides in the chromosome. Variant histone H3 which replaces conventional H3 in a wide range of nucleosomes in active genes. Constitutes the predominant form of histone H3 in non-dividing cells and is incorporated into chromatin independently of DNA synthesis. Deposited at sites of nucleosomal displacement throughout transcribed genes, suggesting that it represents an epigenetic imprint of transcriptionally active chromatin. Nucleosomes wrap and compact DNA into chromatin, limiting DNA accessibility to the cellular machineries which require DNA as a template. Histones thereby play a central role in transcription regulation, DNA repair, DNA replication and chromosomal stability. DNA accessibility is regulated via a complex set of post-translational modifications of histones, also called histone code, and nucleosome remodeling. The chain is Histone H3.3 from Hordeum vulgare (Barley).